A 513-amino-acid polypeptide reads, in one-letter code: Probable E3 ubiquitin-protein ligase XBOS34 (513 aa).

ANK repeat units lie at residues E39–A69, Y75–I104, and D108–G137. Polar residues-rich tracts occupy residues I309–N327 and S335–N355. Disordered regions lie at residues I309–T378 and S423–G455. Residues G361–T378 are compositionally biased toward low complexity. The span at A436–E446 shows a compositional bias: basic and acidic residues. The RING-type zinc finger occupies C462–R501.

It catalyses the reaction S-ubiquitinyl-[E2 ubiquitin-conjugating enzyme]-L-cysteine + [acceptor protein]-L-lysine = [E2 ubiquitin-conjugating enzyme]-L-cysteine + N(6)-ubiquitinyl-[acceptor protein]-L-lysine.. It participates in protein modification; protein ubiquitination. The sequence is that of Probable E3 ubiquitin-protein ligase XBOS34 (XBOS34) from Oryza sativa subsp. japonica (Rice).